The sequence spans 301 residues: Fructokinase (301 aa).

Histidine 165, cysteine 181, histidine 184, and cysteine 187 together coordinate Zn(2+).

The protein belongs to the ROK (NagC/XylR) family. The cofactor is Mg(2+).

The enzyme catalyses D-fructose + ATP = D-fructose 6-phosphate + ADP + H(+). Its activity is regulated as follows. Inhibition by zinc ions. The polypeptide is Fructokinase (frk) (Zymomonas mobilis subsp. mobilis (strain ATCC 31821 / ZM4 / CP4)).